The chain runs to 265 residues: Glutamate racemase (265 aa).

Substrate-binding positions include 12 to 13 (DS) and 44 to 45 (YG). The active-site Proton donor/acceptor is C75. 76 to 77 (NT) lines the substrate pocket. C186 functions as the Proton donor/acceptor in the catalytic mechanism. Position 187–188 (187–188 (TH)) interacts with substrate.

Belongs to the aspartate/glutamate racemases family.

It carries out the reaction L-glutamate = D-glutamate. It functions in the pathway cell wall biogenesis; peptidoglycan biosynthesis. Its function is as follows. Provides the (R)-glutamate required for cell wall biosynthesis. This is Glutamate racemase from Pseudomonas putida (strain GB-1).